The primary structure comprises 595 residues: Probable serine/threonine-protein kinase KIN1 homolog (595 aa).

Positions 67-316 (YKLIKTLGKG…LENVKKSKWT (250 aa)) constitute a Protein kinase domain. Residues 73 to 81 (LGKGSCAKV) and Lys96 each bind ATP. The active-site Proton acceptor is the Asp188.

The protein belongs to the protein kinase superfamily. CAMK Ser/Thr protein kinase family. NIM1 subfamily.

Its subcellular location is the cytoplasm. It is found in the cell membrane. It carries out the reaction L-seryl-[protein] + ATP = O-phospho-L-seryl-[protein] + ADP + H(+). The catalysed reaction is L-threonyl-[protein] + ATP = O-phospho-L-threonyl-[protein] + ADP + H(+). Functionally, serine/threonine protein kinase involved in regulation of exocytosis. The protein is Probable serine/threonine-protein kinase KIN1 homolog (KIN1) of Enterocytozoon bieneusi (strain H348) (Microsporidian parasite).